We begin with the raw amino-acid sequence, 402 residues long: MGCSASKPSEPSNAKLPSAPVPKKVEQVPEPKPEPQPQPEPQPQPEPPKPAEPAPAPAPAPEPQKPAEPAPKVVAVEDDTNEAYGLLLCGAGESGKTTFTRQLKLRYLNGFNEKDCRDFLRTIRGNLVETMQLLLVWLEHNNIEIEDSELSSMAQDIIDVDPQDCEFNEELVEKLKALWENEQIKKAFEHKDETAVPDHMPYFFAKIDELAGEDYIPSNEDVLRARIRSIGIEAITFDLQGARIRIFDVGGQKSERSKWANVMNQVEGVIFCVSFAEFDKPMFEDQNVLRINDSLEIFGNITHQEKFSNSPIFLVCNKFDVFTEKIKNTDAFVKIFPEFSGDSHNPEACADYLIQRFLDKAAPLSEDRPIIQYKIVALNGDQVVETADAICKFISDKYYQDA.

The segment covering 1–12 (MGCSASKPSEPS) has biased composition (polar residues). The segment at 1–70 (MGCSASKPSE…PEPQKPAEPA (70 aa)) is disordered. The N-myristoyl glycine moiety is linked to residue G2. The S-palmitoyl cysteine moiety is linked to residue C3. A compositionally biased stretch (basic and acidic residues) spans 23–33 (KKVEQVPEPKP). Residues 34–69 (EPQPQPEPQPQPEPPKPAEPAPAPAPAPEPQKPAEP) are compositionally biased toward pro residues. One can recognise a G-alpha domain in the interval 82 to 402 (EAYGLLLCGA…FISDKYYQDA (321 aa)). The G1 motif stretch occupies residues 85 to 98 (GLLLCGAGESGKTT). The GTP site is built by E93, S94, G95, K96, T97, T98, D198, L223, S229, G251, N317, K318, D320, and A377. T97 is a binding site for Mg(2+). Residues 221–229 (DVLRARIRS) form a G2 motif region. S229 contacts Mg(2+). The interval 244–253 (IRIFDVGGQK) is G3 motif. Positions 313 to 320 (FLVCNKFD) are G4 motif. The G5 motif stretch occupies residues 375 to 380 (IVALNG).

This sequence belongs to the G-alpha family. G proteins are composed of 3 units; alpha, beta and gamma. The alpha chain contains the guanine nucleotide binding site. It depends on Mg(2+) as a cofactor.

Its subcellular location is the cytoplasm. It is found in the perinuclear region. It localises to the endomembrane system. In terms of biological role, guanine nucleotide-binding proteins (G proteins) are involved as modulators or transducers in various transmembrane signaling systems. This chain is Guanine nucleotide-binding protein subunit alpha-1 (GA1), found in Trichomonas vaginalis.